Reading from the N-terminus, the 268-residue chain is Ribosome maturation factor RimP (268 aa).

2 disordered regions span residues 1 to 41 (MGSA…GRGG) and 223 to 268 (LVEP…EMTR). Residues 32–41 (PSGSARGRGG) are compositionally biased toward low complexity. Over residues 248 to 257 (ESNDDGREAG) the composition is skewed to basic and acidic residues.

The protein belongs to the RimP family.

The protein localises to the cytoplasm. Its function is as follows. Required for maturation of 30S ribosomal subunits. This chain is Ribosome maturation factor RimP, found in Frankia casuarinae (strain DSM 45818 / CECT 9043 / HFP020203 / CcI3).